A 295-amino-acid polypeptide reads, in one-letter code: Protein U26 (295 aa).

The next 8 membrane-spanning stretches (helical) occupy residues 4–24 (LTDS…LYTF), 31–51 (SPLG…LTFK), 66–86 (IVFL…VVMI), 103–123 (VMIM…SLFF), 183–203 (FTVE…FLSM), 218–238 (VFFK…ILSG), 243–263 (VCLY…SIML), and 274–294 (FYAG…MYFG).

It is found in the membrane. This is Protein U26 (U26) from Human herpesvirus 6A (strain Uganda-1102) (HHV-6 variant A).